The primary structure comprises 206 residues: Small ribosomal subunit protein uS4 (206 aa).

Basic and acidic residues predominate over residues 1 to 16 (MTKRQESKYKIDRRMG). A disordered region spans residues 1 to 46 (MTKRQESKYKIDRRMGENIWGRPKSPVNRREYGPGQHGQRRKGKLS). The 61-residue stretch at 94–154 (RRLDAVVYRA…EKSKQLAIVL (61 aa)) folds into the S4 RNA-binding domain.

It belongs to the universal ribosomal protein uS4 family. Part of the 30S ribosomal subunit. Contacts protein S5. The interaction surface between S4 and S5 is involved in control of translational fidelity.

Its function is as follows. One of the primary rRNA binding proteins, it binds directly to 16S rRNA where it nucleates assembly of the body of the 30S subunit. With S5 and S12 plays an important role in translational accuracy. This Parvibaculum lavamentivorans (strain DS-1 / DSM 13023 / NCIMB 13966) protein is Small ribosomal subunit protein uS4.